A 404-amino-acid chain; its full sequence is Glycosylated lysosomal membrane protein (404 aa).

Positions 1-35 (MRGSVERGWGWGHCASSPLLLWTLLLFAAPFGLLG) are cleaved as a signal peptide. Over 36–371 (EKTRQLSLEV…GRLVPTSPGH (336 aa)) the chain is Lumenal. 5 N-linked (GlcNAc...) asparagine glycosylation sites follow: asparagine 65, asparagine 134, asparagine 159, asparagine 186, and asparagine 229. Residues 372–392 (HGSALGAPGLMLLGGGLVLLL) form a helical membrane-spanning segment. The Cytoplasmic segment spans residues 393 to 404 (HHRKYSEYQSIN). The short motif at 400–404 (YQSIN) is the Lysosomal targeting motif element.

Belongs to the GLMP family. As to quaternary structure, interacts (via lumenal domain) with lysosomal protein MFSD1; the interaction starts while both proteins are still in the endoplasmic reticulum and is required for stabilization of MFSD1 in lysosomes but has no direct effect on its targeting to lysosomes or transporter activity. In terms of processing, highly N-glycosylated. N-glycosylation is essential for GLMP stability and for MFSD1 lysosomal localization.

It localises to the lysosome membrane. Required to protect lysosomal transporter MFSD1 from lysosomal proteolysis and for MFSD1 lysosomal localization. The chain is Glycosylated lysosomal membrane protein from Pongo abelii (Sumatran orangutan).